The sequence spans 425 residues: Glutamate-1-semialdehyde 2,1-aminomutase (425 aa).

At Lys265 the chain carries N6-(pyridoxal phosphate)lysine.

The protein belongs to the class-III pyridoxal-phosphate-dependent aminotransferase family. HemL subfamily. As to quaternary structure, homodimer. Pyridoxal 5'-phosphate is required as a cofactor.

It localises to the cytoplasm. The enzyme catalyses (S)-4-amino-5-oxopentanoate = 5-aminolevulinate. Its pathway is porphyrin-containing compound metabolism; protoporphyrin-IX biosynthesis; 5-aminolevulinate from L-glutamyl-tRNA(Glu): step 2/2. The chain is Glutamate-1-semialdehyde 2,1-aminomutase from Thiobacillus denitrificans (strain ATCC 25259 / T1).